The following is a 65-amino-acid chain: Keratin-associated protein 23-1 (65 aa).

Interacts with hair keratins.

Its function is as follows. In the hair cortex, hair keratin intermediate filaments are embedded in an interfilamentous matrix, consisting of hair keratin-associated proteins (KRTAP), which are essential for the formation of a rigid and resistant hair shaft through their extensive disulfide bond cross-linking with abundant cysteine residues of hair keratins. The matrix proteins include the high-sulfur and high-glycine-tyrosine keratins. This chain is Keratin-associated protein 23-1 (KRTAP23-1), found in Homo sapiens (Human).